The chain runs to 418 residues: Acyl-coenzyme A amino acid N-acyltransferase 2 (418 aa).

Active-site charge relay system residues include serine 234, aspartate 327, and histidine 361. The Microbody targeting signal signature appears at 416-418; sequence GKL.

Belongs to the C/M/P thioester hydrolase family.

It is found in the peroxisome. Functionally, acyltransferase which efficiently conjugates very long-chain and long-chain fatty acids to taurine. Shows no conjugation activity in the presence of glycine. This Rattus norvegicus (Rat) protein is Acyl-coenzyme A amino acid N-acyltransferase 2.